A 182-amino-acid polypeptide reads, in one-letter code: Histone deacetylase complex subunit SAP30L (182 aa).

The residue at position 1 (M1) is an N-acetylmethionine. The span at M1–S10 shows a compositional bias: acidic residues. The interval M1–P22 is disordered. 2 cysteine pairs are disulfide-bonded: C28–C29 and C37–C73. The Atypical zinc-finger motif lies at C28–H76. K48 is covalently cross-linked (Glycyl lysine isopeptide (Lys-Gly) (interchain with G-Cter in SUMO2)). Positions R84 to A103 are disordered. Residues N85–K90 carry the Nuclear localization signal (NLS) motif. The important for DNA and phosphoinositide binding stretch occupies residues R87–R89. 2 positions are modified to phosphoserine: S92 and S98. Residues K154, K165, and K174 each participate in a glycyl lysine isopeptide (Lys-Gly) (interchain with G-Cter in SUMO2) cross-link.

Belongs to the SAP30 family. As to quaternary structure, interacts with components of the histone deacetylase complex SIN3A, HDAC1 and HDAC2. Binds histones and nucleosomes. Interacts with FEZ1.

Its subcellular location is the nucleus. The protein localises to the nucleolus. Functions as a transcription repressor, probably via its interaction with histone deacetylase complexes. Involved in the functional recruitment of the class 1 Sin3-histone deacetylase complex (HDAC) to the nucleolus. Binds DNA, apparently without sequence-specificity, and bends bound double-stranded DNA. Binds phosphoinositol phosphates (phosphoinositol 3-phosphate, phosphoinositol 4-phosphate and phosphoinositol 5-phosphate) via the same basic sequence motif that mediates DNA binding and nuclear import. This chain is Histone deacetylase complex subunit SAP30L (Sap30l), found in Mus musculus (Mouse).